The following is a 252-amino-acid chain: 5'-nucleotidase SurE (252 aa).

A divalent metal cation-binding residues include aspartate 8, aspartate 9, serine 39, and asparagine 91.

This sequence belongs to the SurE nucleotidase family. A divalent metal cation serves as cofactor.

The protein resides in the cytoplasm. It catalyses the reaction a ribonucleoside 5'-phosphate + H2O = a ribonucleoside + phosphate. Functionally, nucleotidase that shows phosphatase activity on nucleoside 5'-monophosphates. The chain is 5'-nucleotidase SurE from Bordetella avium (strain 197N).